We begin with the raw amino-acid sequence, 240 residues long: Aspartate/glutamate leucyltransferase (240 aa).

This sequence belongs to the R-transferase family. Bpt subfamily.

Its subcellular location is the cytoplasm. The enzyme catalyses N-terminal L-glutamyl-[protein] + L-leucyl-tRNA(Leu) = N-terminal L-leucyl-L-glutamyl-[protein] + tRNA(Leu) + H(+). It catalyses the reaction N-terminal L-aspartyl-[protein] + L-leucyl-tRNA(Leu) = N-terminal L-leucyl-L-aspartyl-[protein] + tRNA(Leu) + H(+). In terms of biological role, functions in the N-end rule pathway of protein degradation where it conjugates Leu from its aminoacyl-tRNA to the N-termini of proteins containing an N-terminal aspartate or glutamate. This chain is Aspartate/glutamate leucyltransferase, found in Bordetella avium (strain 197N).